Here is a 67-residue protein sequence, read N- to C-terminus: ATP synthase protein 8 (67 aa).

Residues 8–24 form a helical membrane-spanning segment; sequence TWFITITSMTITLFIMF. N6-acetyllysine; alternate is present on Lys-54. Lys-54 carries the post-translational modification N6-succinyllysine; alternate. Lys-57 bears the N6-acetyllysine mark.

This sequence belongs to the ATPase protein 8 family. As to quaternary structure, F-type ATPases have 2 components, CF(1) - the catalytic core - and CF(0) - the membrane proton channel. Component of an ATP synthase complex composed of ATP5PB, ATP5MC1, ATP5F1E, ATP5PD, ATP5ME, ATP5PF, ATP5MF, MT-ATP6, MT-ATP8, ATP5F1A, ATP5F1B, ATP5F1D, ATP5F1C, ATP5PO, ATP5MG, ATP5MK and ATP5MJ. Interacts with PRICKLE3.

The protein localises to the mitochondrion membrane. Mitochondrial membrane ATP synthase (F(1)F(0) ATP synthase or Complex V) produces ATP from ADP in the presence of a proton gradient across the membrane which is generated by electron transport complexes of the respiratory chain. F-type ATPases consist of two structural domains, F(1) - containing the extramembraneous catalytic core and F(0) - containing the membrane proton channel, linked together by a central stalk and a peripheral stalk. During catalysis, ATP synthesis in the catalytic domain of F(1) is coupled via a rotary mechanism of the central stalk subunits to proton translocation. Part of the complex F(0) domain. Minor subunit located with subunit a in the membrane. The chain is ATP synthase protein 8 (MT-ATP8) from Rhinoceros unicornis (Greater Indian rhinoceros).